A 171-amino-acid polypeptide reads, in one-letter code: Large ribosomal subunit protein uL10 (171 aa).

It belongs to the universal ribosomal protein uL10 family. In terms of assembly, part of the ribosomal stalk of the 50S ribosomal subunit. The N-terminus interacts with L11 and the large rRNA to form the base of the stalk. The C-terminus forms an elongated spine to which L12 dimers bind in a sequential fashion forming a multimeric L10(L12)X complex.

Its function is as follows. Forms part of the ribosomal stalk, playing a central role in the interaction of the ribosome with GTP-bound translation factors. In Paracoccus denitrificans (strain Pd 1222), this protein is Large ribosomal subunit protein uL10.